A 99-amino-acid chain; its full sequence is Cell division protein FtsB (99 aa).

The Cytoplasmic segment spans residues 1-3 (MKF). The chain crosses the membrane as a helical span at residues 4–21 (FVIALIVLLGLLQYRLWS). The Periplasmic portion of the chain corresponds to 22-99 (GDNSLPEYFV…GDRSVSSPSQ (78 aa)). Residues 31-73 (VLQKQIAAQQDGNAKLNERNQVLKEEIIDLKSGTEAIEERARN) adopt a coiled-coil conformation.

Belongs to the FtsB family. In terms of assembly, part of a complex composed of FtsB, FtsL and FtsQ.

The protein localises to the cell inner membrane. Functionally, essential cell division protein. May link together the upstream cell division proteins, which are predominantly cytoplasmic, with the downstream cell division proteins, which are predominantly periplasmic. The sequence is that of Cell division protein FtsB from Shewanella sp. (strain MR-4).